A 354-amino-acid polypeptide reads, in one-letter code: Probable dual-specificity RNA methyltransferase RlmN (354 aa).

Catalysis depends on Glu-94, which acts as the Proton acceptor. In terms of domain architecture, Radical SAM core spans 103–332 (GRRRNTACLS…QEAGLEAAIR (230 aa)). Cysteines 110 and 343 form a disulfide. Cys-117, Cys-121, and Cys-124 together coordinate [4Fe-4S] cluster. S-adenosyl-L-methionine-binding positions include 169–170 (GE), Ser-201, 224–226 (SLH), and Asn-300. Residue Cys-343 is the S-methylcysteine intermediate of the active site.

This sequence belongs to the radical SAM superfamily. RlmN family. [4Fe-4S] cluster is required as a cofactor.

The protein resides in the cytoplasm. It catalyses the reaction adenosine(2503) in 23S rRNA + 2 reduced [2Fe-2S]-[ferredoxin] + 2 S-adenosyl-L-methionine = 2-methyladenosine(2503) in 23S rRNA + 5'-deoxyadenosine + L-methionine + 2 oxidized [2Fe-2S]-[ferredoxin] + S-adenosyl-L-homocysteine. The catalysed reaction is adenosine(37) in tRNA + 2 reduced [2Fe-2S]-[ferredoxin] + 2 S-adenosyl-L-methionine = 2-methyladenosine(37) in tRNA + 5'-deoxyadenosine + L-methionine + 2 oxidized [2Fe-2S]-[ferredoxin] + S-adenosyl-L-homocysteine. Its function is as follows. Specifically methylates position 2 of adenine 2503 in 23S rRNA and position 2 of adenine 37 in tRNAs. In Moorella thermoacetica (strain ATCC 39073 / JCM 9320), this protein is Probable dual-specificity RNA methyltransferase RlmN.